A 130-amino-acid polypeptide reads, in one-letter code: DNA-directed RNA polymerase subunit omega (130 aa).

The disordered stretch occupies residues 110 to 130 (EELLKGLEGLAPPEEQPEEDE).

It belongs to the RNA polymerase subunit omega family. As to quaternary structure, the RNAP catalytic core consists of 2 alpha, 1 beta, 1 beta' and 1 omega subunit. When a sigma factor is associated with the core the holoenzyme is formed, which can initiate transcription.

It catalyses the reaction RNA(n) + a ribonucleoside 5'-triphosphate = RNA(n+1) + diphosphate. Promotes RNA polymerase assembly. Latches the N- and C-terminal regions of the beta' subunit thereby facilitating its interaction with the beta and alpha subunits. This Rhodopseudomonas palustris (strain HaA2) protein is DNA-directed RNA polymerase subunit omega.